Here is a 554-residue protein sequence, read N- to C-terminus: RecBCD enzyme subunit RecD (554 aa).

155–162 (GGPGTGKT) provides a ligand contact to ATP.

This sequence belongs to the RecD family. As to quaternary structure, heterotrimer of RecB, RecC and RecD. All subunits contribute to DNA-binding.

It carries out the reaction Couples ATP hydrolysis with the unwinding of duplex DNA at the replication fork by translocating in the 5'-3' direction. This creates two antiparallel DNA single strands (ssDNA). The leading ssDNA polymer is the template for DNA polymerase III holoenzyme which synthesizes a continuous strand.. The catalysed reaction is ATP + H2O = ADP + phosphate + H(+). Its function is as follows. A helicase/nuclease that prepares dsDNA breaks (DSB) for recombinational DNA repair. Binds to DSBs and unwinds DNA via a highly rapid and processive ATP-dependent bidirectional helicase activity. Holoenzyme degrades any linearized DNA that is unable to undergo homologous recombination. In the holoenzyme this subunit has ssDNA-dependent ATPase and 5'-3' helicase activity. When added to pre-assembled RecBC greatly stimulates nuclease activity and augments holoenzyme processivity. Unlike the case in E.coli, suppresses RecA-dependent homologous recombination, is instead required for single-strand annealing pathway repair of DSB. The chain is RecBCD enzyme subunit RecD from Mycolicibacterium smegmatis (strain ATCC 700084 / mc(2)155) (Mycobacterium smegmatis).